The chain runs to 357 residues: Phospho-N-acetylmuramoyl-pentapeptide-transferase (357 aa).

Helical transmembrane passes span 4 to 24 (QILFSGVIGLFLTLVGTPLLI), 52 to 72 (TMGGIAFILATIIAYFMSKVI), 77 to 97 (PTFSGLLVLGLMAGMGLVGFL), 115 to 135 (AKMAGQLIVGIAFAVLALQFA), 153 to 173 (FGWTIGPVLFVIWALFMILAM), 186 to 206 (LATGAATMVFGAYTFIGVWQF), 228 to 248 (PLDLAVVASALMGACFGFLWW), 255 to 275 (IFMGDTGSLALGGALAGLAIC), 280 to 300 (LLVALLGGLFVLITMSVVIQV), and 334 to 354 (FWIIQGMCVIVGLGLFYAGWA).

This sequence belongs to the glycosyltransferase 4 family. MraY subfamily. Mg(2+) is required as a cofactor.

Its subcellular location is the cell membrane. It carries out the reaction UDP-N-acetyl-alpha-D-muramoyl-L-alanyl-gamma-D-glutamyl-meso-2,6-diaminopimeloyl-D-alanyl-D-alanine + di-trans,octa-cis-undecaprenyl phosphate = di-trans,octa-cis-undecaprenyl diphospho-N-acetyl-alpha-D-muramoyl-L-alanyl-D-glutamyl-meso-2,6-diaminopimeloyl-D-alanyl-D-alanine + UMP. It functions in the pathway cell wall biogenesis; peptidoglycan biosynthesis. Its function is as follows. Catalyzes the initial step of the lipid cycle reactions in the biosynthesis of the cell wall peptidoglycan: transfers peptidoglycan precursor phospho-MurNAc-pentapeptide from UDP-MurNAc-pentapeptide onto the lipid carrier undecaprenyl phosphate, yielding undecaprenyl-pyrophosphoryl-MurNAc-pentapeptide, known as lipid I. This chain is Phospho-N-acetylmuramoyl-pentapeptide-transferase, found in Streptomyces avermitilis (strain ATCC 31267 / DSM 46492 / JCM 5070 / NBRC 14893 / NCIMB 12804 / NRRL 8165 / MA-4680).